A 755-amino-acid polypeptide reads, in one-letter code: Xaa-Pro dipeptidyl-peptidase (755 aa).

Residues Ser348, Asp468, and His498 each act as charge relay system in the active site.

It belongs to the peptidase S15 family. As to quaternary structure, homodimer.

Its subcellular location is the cytoplasm. The catalysed reaction is Hydrolyzes Xaa-Pro-|- bonds to release unblocked, N-terminal dipeptides from substrates including Ala-Pro-|-p-nitroanilide and (sequentially) Tyr-Pro-|-Phe-Pro-|-Gly-Pro-|-Ile.. Its function is as follows. Removes N-terminal dipeptides sequentially from polypeptides having unsubstituted N-termini provided that the penultimate residue is proline. The protein is Xaa-Pro dipeptidyl-peptidase of Streptococcus thermophilus.